Reading from the N-terminus, the 524-residue chain is Probable cytosol aminopeptidase (524 aa).

Mn(2+) contacts are provided by K288 and D293. The active site involves K300. Residues D311, D370, and E372 each contribute to the Mn(2+) site. The active site involves R374.

This sequence belongs to the peptidase M17 family. Requires Mn(2+) as cofactor.

Its subcellular location is the cytoplasm. The enzyme catalyses Release of an N-terminal amino acid, Xaa-|-Yaa-, in which Xaa is preferably Leu, but may be other amino acids including Pro although not Arg or Lys, and Yaa may be Pro. Amino acid amides and methyl esters are also readily hydrolyzed, but rates on arylamides are exceedingly low.. The catalysed reaction is Release of an N-terminal amino acid, preferentially leucine, but not glutamic or aspartic acids.. In terms of biological role, presumably involved in the processing and regular turnover of intracellular proteins. Catalyzes the removal of unsubstituted N-terminal amino acids from various peptides. This Mycobacterium leprae (strain TN) protein is Probable cytosol aminopeptidase (pepA).